We begin with the raw amino-acid sequence, 132 residues long: Large-conductance mechanosensitive channel (132 aa).

Transmembrane regions (helical) follow at residues V14–L34 and G67–V87.

The protein belongs to the MscL family. Homopentamer.

The protein localises to the cell membrane. Its function is as follows. Channel that opens in response to stretch forces in the membrane lipid bilayer. May participate in the regulation of osmotic pressure changes within the cell. The chain is Large-conductance mechanosensitive channel from Bacillus anthracis (strain A0248).